Here is a 57-residue protein sequence, read N- to C-terminus: Large ribosomal subunit protein bL32 (57 aa).

The span at 1 to 19 (MAVPKRRKSRSNTRSRRSQ) shows a compositional bias: basic residues. Residues 1-22 (MAVPKRRKSRSNTRSRRSQWKA) are disordered.

The protein belongs to the bacterial ribosomal protein bL32 family.

This chain is Large ribosomal subunit protein bL32, found in Mycobacterium tuberculosis (strain ATCC 25177 / H37Ra).